A 665-amino-acid chain; its full sequence is tRNA 5-methylaminomethyl-2-thiouridine biosynthesis bifunctional protein MnmC (665 aa).

The interval 1 to 243 (MSQTSLHHAR…KWAMLAGERV (243 aa)) is tRNA (mnm(5)s(2)U34)-methyltransferase. Positions 268–665 (IGGGIASAMT…RKLLKGKPLN (398 aa)) are FAD-dependent cmnm(5)s(2)U34 oxidoreductase.

In the N-terminal section; belongs to the methyltransferase superfamily. tRNA (mnm(5)s(2)U34)-methyltransferase family. This sequence in the C-terminal section; belongs to the DAO family. FAD serves as cofactor.

It localises to the cytoplasm. It catalyses the reaction 5-aminomethyl-2-thiouridine(34) in tRNA + S-adenosyl-L-methionine = 5-methylaminomethyl-2-thiouridine(34) in tRNA + S-adenosyl-L-homocysteine + H(+). Catalyzes the last two steps in the biosynthesis of 5-methylaminomethyl-2-thiouridine (mnm(5)s(2)U) at the wobble position (U34) in tRNA. Catalyzes the FAD-dependent demodification of cmnm(5)s(2)U34 to nm(5)s(2)U34, followed by the transfer of a methyl group from S-adenosyl-L-methionine to nm(5)s(2)U34, to form mnm(5)s(2)U34. The sequence is that of tRNA 5-methylaminomethyl-2-thiouridine biosynthesis bifunctional protein MnmC from Aeromonas salmonicida (strain A449).